The sequence spans 488 residues: Probable glycine dehydrogenase (decarboxylating) subunit 2 (488 aa).

K274 bears the N6-(pyridoxal phosphate)lysine mark.

The protein belongs to the GcvP family. C-terminal subunit subfamily. The glycine cleavage system is composed of four proteins: P, T, L and H. In this organism, the P 'protein' is a heterodimer of two subunits. Pyridoxal 5'-phosphate is required as a cofactor.

It carries out the reaction N(6)-[(R)-lipoyl]-L-lysyl-[glycine-cleavage complex H protein] + glycine + H(+) = N(6)-[(R)-S(8)-aminomethyldihydrolipoyl]-L-lysyl-[glycine-cleavage complex H protein] + CO2. In terms of biological role, the glycine cleavage system catalyzes the degradation of glycine. The P protein binds the alpha-amino group of glycine through its pyridoxal phosphate cofactor; CO(2) is released and the remaining methylamine moiety is then transferred to the lipoamide cofactor of the H protein. The protein is Probable glycine dehydrogenase (decarboxylating) subunit 2 of Listeria innocua serovar 6a (strain ATCC BAA-680 / CLIP 11262).